The chain runs to 212 residues: Ras-related protein Rab-15 (212 aa).

The GTP site is built by serine 17, glycine 18, valine 19, glycine 20, lysine 21, threonine 22, cysteine 23, serine 35, serine 39, and threonine 40. Threonine 22 is a binding site for Mg(2+). 2 consecutive short sequence motifs (switch) follow at residues 31 to 45 (NEFHSSHISTIGVDF) and 63 to 80 (DTAGQERYQTITKQYYRR). Threonine 40 and aspartate 63 together coordinate Mg(2+). Residues glycine 66, asparagine 121, lysine 122, aspartate 124, serine 151, and alanine 152 each contribute to the GTP site. Positions 192–212 (ELEEDEGKPEGPANSSKTCWC) are disordered. Residues cysteine 210 and cysteine 212 are each lipidated (S-geranylgeranyl cysteine). Cysteine 212 bears the Cysteine methyl ester mark.

It belongs to the small GTPase superfamily. Rab family. In terms of assembly, the GTP bound form of RAB15 interacts with REP15. Interacts (GTP-bound form) with MICAL1, MICAL3, MICALCL, EHBP1 and EHBP1L1. Mg(2+) serves as cofactor.

It is found in the cell membrane. The enzyme catalyses GTP + H2O = GDP + phosphate + H(+). Its activity is regulated as follows. Regulated by guanine nucleotide exchange factors (GEFs) which promote the exchange of bound GDP for free GTP. Regulated by GTPase activating proteins (GAPs) which increase the GTP hydrolysis activity. Inhibited by GDP dissociation inhibitors (GDIs). In terms of biological role, the small GTPases Rab are key regulators of intracellular membrane trafficking, from the formation of transport vesicles to their fusion with membranes. Rabs cycle between an inactive GDP-bound form and an active GTP-bound form that is able to recruit to membranes different sets of downstream effectors directly responsible for vesicle formation, movement, tethering and fusion. RAB15 may act in concert with RAB3A in regulating aspects of synaptic vesicle membrane flow within the nerve terminal. The polypeptide is Ras-related protein Rab-15 (Mus musculus (Mouse)).